The chain runs to 210 residues: Protein-methionine-sulfoxide reductase heme-binding subunit MsrQ (210 aa).

6 consecutive transmembrane segments (helical) span residues 8-28 (LAVFLAACVAPVWWLYQAWIF), 37-57 (VLVENFGLATLVMLLITLAMT), 75-95 (LGLWCFAYVVLHMTMYALFIL), 110-130 (PYIIVGALAFLGLLALAVTSN), 147-167 (LVYVILGLGLLHMFWIVRADL), and 169-189 (EWALYAGIGAILLLLRVPMIA).

The protein belongs to the MsrQ family. In terms of assembly, heterodimer of a catalytic subunit (MsrP) and a heme-binding subunit (MsrQ). The cofactor is FMN. It depends on heme b as a cofactor.

The protein resides in the cell inner membrane. In terms of biological role, part of the MsrPQ system that repairs oxidized periplasmic proteins containing methionine sulfoxide residues (Met-O), using respiratory chain electrons. Thus protects these proteins from oxidative-stress damage caused by reactive species of oxygen and chlorine generated by the host defense mechanisms. MsrPQ is essential for the maintenance of envelope integrity under bleach stress, rescuing a wide series of structurally unrelated periplasmic proteins from methionine oxidation. MsrQ provides electrons for reduction to the reductase catalytic subunit MsrP, using the quinone pool of the respiratory chain. The polypeptide is Protein-methionine-sulfoxide reductase heme-binding subunit MsrQ (Pseudomonas syringae pv. tomato (strain ATCC BAA-871 / DC3000)).